Reading from the N-terminus, the 416-residue chain is (S)-ureidoglycine--glyoxylate transaminase (416 aa).

The residue at position 198 (lysine 198) is an N6-(pyridoxal phosphate)lysine.

Belongs to the class-V pyridoxal-phosphate-dependent aminotransferase family. Homodimer. Pyridoxal 5'-phosphate is required as a cofactor.

The catalysed reaction is (S)-2-ureidoglycine + glyoxylate = N-carbamoyl-2-oxoglycine + glycine. It functions in the pathway nitrogen metabolism; (S)-allantoin degradation. Functionally, catalyzes the transamination between an unstable intermediate ((S)-ureidoglycine) and the end product of purine catabolism (glyoxylate) to yield oxalurate and glycine. Glyoxylate is the preferred substrate, but other amino-group acceptors can be used. In Bacillus subtilis (strain 168), this protein is (S)-ureidoglycine--glyoxylate transaminase.